A 570-amino-acid chain; its full sequence is Formate--tetrahydrofolate ligase (570 aa).

Position 65–72 (65–72 (TPFGEGKT)) interacts with ATP.

It belongs to the formate--tetrahydrofolate ligase family.

The enzyme catalyses (6S)-5,6,7,8-tetrahydrofolate + formate + ATP = (6R)-10-formyltetrahydrofolate + ADP + phosphate. It functions in the pathway one-carbon metabolism; tetrahydrofolate interconversion. The polypeptide is Formate--tetrahydrofolate ligase (Shewanella halifaxensis (strain HAW-EB4)).